A 720-amino-acid polypeptide reads, in one-letter code: Neurochondrin (720 aa).

It belongs to the neurochondrin family.

The protein resides in the cytoplasm. Its subcellular location is the cytosol. It localises to the cell projection. The protein localises to the dendrite. It is found in the postsynapse. In terms of biological role, probably involved in signal transduction, in the nervous system. Required for the spatial learning process. May also be involved in neurite outgrowth. In Xenopus laevis (African clawed frog), this protein is Neurochondrin (ncdn).